A 1460-amino-acid chain; its full sequence is ABC transporter C family member 5 (1460 aa).

Disordered regions lie at residues 1-23 (MKYN…NESE) and 37-68 (GNNN…KKKN). The span at 37–55 (GNNNNDINNNNNINNNNDS) shows a compositional bias: low complexity. 5 helical membrane passes run 196 to 216 (FALS…GPIF), 238 to 258 (LGYY…IFLY), 320 to 340 (LIFA…CVGW), 425 to 445 (LIVV…TVYY), and 456 to 476 (IFAA…LPYG). An ABC transmembrane type-1 1 domain is found at 196–482 (FALSWVHFGL…LPYGYNIYIQ (287 aa)). The disordered stretch occupies residues 537–567 (IKPQTNPPPPRTTPSNDKSSPSGNNSNNEKK). Polar residues predominate over residues 551–563 (SNDKSSPSGNNSN). An ABC transporter 1 domain is found at 560–783 (NNSNNEKKEV…INSAYGNSSL (224 aa)). 593-600 (GPVGSGKS) is a binding site for ATP. The next 4 helical transmembrane spans lie at 842–862 (MYYV…GYCI), 922–942 (AGEF…LIIV), 1014–1034 (ILVI…PIII), and 1108–1128 (WLGL…CIFI). The 314-residue stretch at 853–1166 (FLIALLGYCI…ATQQLAELET (314 aa)) folds into the ABC transmembrane type-1 2 domain. The region spanning 1210–1444 (IIFENVVMSY…ENSLFNWLID (235 aa)) is the ABC transporter 2 domain. 1244-1251 (GRTGSGKS) is an ATP binding site.

It belongs to the ABC transporter superfamily. ABCC family. Conjugate transporter (TC 3.A.1.208) subfamily.

It localises to the membrane. The sequence is that of ABC transporter C family member 5 (abcC5) from Dictyostelium discoideum (Social amoeba).